A 212-amino-acid polypeptide reads, in one-letter code: MSARIVVTGTDTGIGKTVFAAALAGALDATYWKPVQSGLEDETDSGAVQRLSGLAADRILPERYRLQTPASPHLAAEIDGVDIDVAALELPSVSRPLVVEGAGGLMVPLTRETTYIDVFARWAAPLVLCARTSLGTINHTLLSIEAIRARDIPLLGVAFLGDENLDSEQIIVELGHTRRLGRLPRLERLDAAALRAGFAAAFEPRDFLGDAP.

13–18 (GIGKTV) contributes to the ATP binding site. Threonine 17 provides a ligand contact to Mg(2+). The active site involves lysine 33. Serine 37 contacts substrate. Glutamate 100 lines the Mg(2+) pocket. Residues 100–103 (EGAG) and 184–186 (PRL) contribute to the ATP site.

Belongs to the dethiobiotin synthetase family. Homodimer. Mg(2+) serves as cofactor.

It localises to the cytoplasm. It carries out the reaction (7R,8S)-7,8-diammoniononanoate + CO2 + ATP = (4R,5S)-dethiobiotin + ADP + phosphate + 3 H(+). It participates in cofactor biosynthesis; biotin biosynthesis; biotin from 7,8-diaminononanoate: step 1/2. Its function is as follows. Catalyzes a mechanistically unusual reaction, the ATP-dependent insertion of CO2 between the N7 and N8 nitrogen atoms of 7,8-diaminopelargonic acid (DAPA, also called 7,8-diammoniononanoate) to form a ureido ring. This chain is ATP-dependent dethiobiotin synthetase BioD, found in Rhodopseudomonas palustris (strain ATCC BAA-98 / CGA009).